A 291-amino-acid chain; its full sequence is Phosphate import ATP-binding protein PstB (291 aa).

The ABC transporter domain maps to 43–286 (ANVKDLSFWY…PKHAMTEEYI (244 aa)). 75-82 (GASGCGKS) is a binding site for ATP.

This sequence belongs to the ABC transporter superfamily. Phosphate importer (TC 3.A.1.7) family. The complex is composed of two ATP-binding proteins (PstB), two transmembrane proteins (PstC and PstA) and a solute-binding protein (PstS).

It is found in the cell inner membrane. It carries out the reaction phosphate(out) + ATP + H2O = ADP + 2 phosphate(in) + H(+). Part of the ABC transporter complex PstSACB involved in phosphate import. Responsible for energy coupling to the transport system. This Alcaligenes faecalis protein is Phosphate import ATP-binding protein PstB.